The sequence spans 75 residues: CDC42 small effector protein 2-B (75 aa).

2 S-palmitoyl cysteine lipidation sites follow: C10 and C11. The region spanning 29-42 (IGEPMNFVHTAHVG) is the CRIB domain.

Belongs to the CDC42SE/SPEC family.

The protein resides in the cytoplasm. Its subcellular location is the cytoskeleton. It is found in the cell membrane. Its function is as follows. Probably involved in the organization of the actin cytoskeleton by acting downstream of CDC42, inducing actin filament assembly. This chain is CDC42 small effector protein 2-B (cdc42se2-b), found in Xenopus laevis (African clawed frog).